Here is a 22-residue protein sequence, read N- to C-terminus: Proline-rich peptide (22 aa).

The interval 1 to 22 is disordered; the sequence is FVDRNRIPRSNNGPKIPIISNP.

The protein resides in the secreted. In terms of biological role, antibacterial peptide active against Gram-positive bacterium M.luteus and Gram-negative bacterium E.coli. The polypeptide is Proline-rich peptide (Calliphora vicina (Blue blowfly)).